The chain runs to 252 residues: 5'-nucleotidase SurE (252 aa).

A divalent metal cation-binding residues include aspartate 8, aspartate 9, serine 42, and asparagine 94.

This sequence belongs to the SurE nucleotidase family. It depends on a divalent metal cation as a cofactor.

It localises to the cytoplasm. It catalyses the reaction a ribonucleoside 5'-phosphate + H2O = a ribonucleoside + phosphate. Nucleotidase that shows phosphatase activity on nucleoside 5'-monophosphates. The protein is 5'-nucleotidase SurE of Ehrlichia ruminantium (strain Welgevonden).